The sequence spans 182 residues: Nucleoid-associated protein At2g24020, chloroplastic (182 aa).

A chloroplast-targeting transit peptide spans 1–48 (MASMAATTNFTKSMLFPFSHVSGNASLNSQRRTWPKQYKSKNGYRSLR).

This sequence belongs to the YbaB/EbfC family. As to quaternary structure, homodimer. Interacts with ALB3 and ALB4.

Its subcellular location is the plastid. It localises to the chloroplast stroma. In terms of biological role, participates with ALB4 in thylakoid protein targeting. May function with specific subset of thylakoidal proteins. Binds to DNA and alters its conformation. May be involved in regulation of gene expression, nucleoid organization and DNA protection. This Arabidopsis thaliana (Mouse-ear cress) protein is Nucleoid-associated protein At2g24020, chloroplastic.